Here is a 106-residue protein sequence, read N- to C-terminus: UPF0145 protein MA_3383 (106 aa).

It belongs to the UPF0145 family.

The protein is UPF0145 protein MA_3383 of Methanosarcina acetivorans (strain ATCC 35395 / DSM 2834 / JCM 12185 / C2A).